We begin with the raw amino-acid sequence, 305 residues long: rRNA 2'-O-methyltransferase fibrillarin (305 aa).

A disordered region spans residues 1 to 70 (MAYTPGSRGG…SGGRGGAKGG (70 aa)). The span at 7 to 69 (SRGGRGGSRG…SSGGRGGAKG (63 aa)) shows a compositional bias: gly residues. Phosphoserine occurs at positions 111 and 114. Residues 160 to 161 (TS), 179 to 180 (EF), 204 to 205 (DA), and 224 to 227 (DVAQ) each bind S-adenosyl-L-methionine.

The protein belongs to the methyltransferase superfamily. Fibrillarin family. Component of box C/D small nucleolar ribonucleoprotein (snoRNP) particles. In terms of processing, by homology to other fibrillarins, some or all of the N-terminal domain arginines are modified to asymmetric dimethylarginine (DMA).

Its subcellular location is the nucleus. The protein resides in the nucleolus. The enzyme catalyses L-glutaminyl-[histone H2A] + S-adenosyl-L-methionine = N(5)-methyl-L-glutaminyl-[histone H2A] + S-adenosyl-L-homocysteine + H(+). In terms of biological role, S-adenosyl-L-methionine-dependent methyltransferase that has the ability to methylate both RNAs and proteins. Involved in pre-rRNA processing by catalyzing the site-specific 2'-hydroxyl methylation of ribose moieties in pre-ribosomal RNA. Site specificity is provided by a guide RNA that base pairs with the substrate. Methylation occurs at a characteristic distance from the sequence involved in base pairing with the guide RNA. Also acts as a protein methyltransferase by mediating methylation of 'Gln-105' of histone H2A (H2AQ105me), a modification that impairs binding of the FACT complex and is specifically present at 35S ribosomal DNA locus. This chain is rRNA 2'-O-methyltransferase fibrillarin (fib1), found in Schizosaccharomyces pombe (strain 972 / ATCC 24843) (Fission yeast).